The primary structure comprises 221 residues: MFQGQRGWFCGSVSHDLRQFWVAEGGTISDPRAADFLFSCDASHPDTLRIYQSLDYIEDNATVFHAYYLSAVANAEIKNSVALGHFILPPASLQKEIRRKIGSFIWEQDQHFLIEKHDEVTSNELKVFRESSVLATDHKKDLSKSTEKHFIRTPVVEKQMYFPLQHYPVNNMVTGYISIDAMKKFLGELHDFIPGSSGYLAYHVQNEINMSAIKNKLKNKY.

Belongs to the TERB2 family. Component of the MAJIN-TERB1-TERB2 complex, composed of MAJIN, TERB1 and TERB2.

It localises to the chromosome. It is found in the telomere. The protein localises to the nucleus inner membrane. Functionally, meiosis-specific telomere-associated protein involved in meiotic telomere attachment to the nucleus inner membrane, a crucial step for homologous pairing and synapsis. Component of the MAJIN-TERB1-TERB2 complex, which promotes telomere cap exchange by mediating attachment of telomeric DNA to the inner nuclear membrane and replacement of the protective cap of telomeric chromosomes: in early meiosis, the MAJIN-TERB1-TERB2 complex associates with telomeric DNA and the shelterin/telosome complex. During prophase, the complex matures and promotes release of the shelterin/telosome complex from telomeric DNA. The protein is Telomere repeats-binding bouquet formation protein 2 of Bos taurus (Bovine).